The following is a 1405-amino-acid chain: MKDLLRFLKTNNKIEEFDTIKISLASPEIVRSWSFGEIKKPETINYRTFKPERDGLFCARIFGPVKDYECLCGKYKRLKHRGVICEKCGVEVTQTKVRRERMGHIELASPTAHIWFLKSLPSRIGLLLDMPLRDIERVLYFESYVVTDGGMTSLNQRQILTEEQYLDSLEEFGDEFDAKMGAEAIQEILKNMNLKETCNNIRKELIDTNSETKRKKLTKRVKLIESFIKSGNKPEWMILTVLPVLPPDLRPLVPLDGGRFATSDLNDLYRRVINRNNRLKRLLDLAAPDIIVRNEKRMLQEAVDALLDNGRRGRAITGSNKRPLKSLADMIKGKQGRFRQNLLGKRVDYSGRSVITVGPYLRLHQCGLPKKMALELFKPFIYGKLEINGFATTIKAAKKMVEREESVVWDILEEVIKEHPVMLNRAPTLHRLGIQAFEPILIEGKAIQLHPLVCAAYNADFDGDQMAVHVPLTLEAQLEARALMMSTNNILSPANGEPIIVPSQDVVLGLYYMTRDRINCLGEGMCLSNPKEAEHLYRSGIAELHAKVKVRISEYNILENKNIVKSVKLIDTTIGRSILWMIVPKGLPFSLVNRVLGKKSISNMLNTCYRVLGLKPTVMFADNIMYTGFSYAAKSGSSVGIDDILIPLKKSKIIKNAEYEVSEIQEQFQSGLVTAGERYNKVIDIWASANERVAKAMMKNLSVETIIDGNGKENKQSSFNNIFMMADSGARGSAAQIRQLAGMRGLMAKPDGSIIETPITANFREGLNVLQYFISTHGARKGLADTALKTANSGYLTRRLVDVAQDLVVTEDDCKTIFGITMTPVIEGGEVKEPLRERVLGRVVAENVMNPGTDTVLVHRNTLLSEKWCNFLEKNLIDKIKVRSVVTCETNFGVCAKCYGRDLARGHLVNKGEAIGVIAAQSIGEPGTQLTMRTFHIGGAASRLASESNIQVKNKGIVKLNNAKFVINENNKIVITSRHASLKIIDEFGRTKEKYKLPYGAFVNKKNGETITSGEVIANWDPHTMPIITEVSGYIRFIDIIENQTITRQTDELTGVSFISVLDTSERIGINKDLRPALKIINLQGKDVFLPGTDIPAQYFLPGKSILQLENGTKINSGDVLARLSLETSGIKDITGGLPRVADLFEARRPKEPAILAEISGIISFGKETKGKRRLVISPINGSDVYEEMIPKWRHLNVFEGERVEKGDVISDGPESPHDILRLRGVHAVTKYIVNEVQDVYRLQGVKINDKHIEVIVRQMLKKATILNGSQSEFLEGEQTEFSRIRIANNNTKSSDKINYSRDLLGITKSSLATESFISAASFQETTRVLTESAVSGKIDELRGLKENVIVGRLIPAGTGYSYHQKRLLERKKRNSIHKSSVNHVTLDEASENLKELLKANLNDN.

Residues cysteine 70, cysteine 72, cysteine 85, and cysteine 88 each coordinate Zn(2+). Residues aspartate 460, aspartate 462, and aspartate 464 each contribute to the Mg(2+) site. 4 residues coordinate Zn(2+): cysteine 814, cysteine 888, cysteine 895, and cysteine 898.

This sequence belongs to the RNA polymerase beta' chain family. In terms of assembly, the RNAP catalytic core consists of 2 alpha, 1 beta, 1 beta' and 1 omega subunit. When a sigma factor is associated with the core the holoenzyme is formed, which can initiate transcription. The cofactor is Mg(2+). Requires Zn(2+) as cofactor.

The enzyme catalyses RNA(n) + a ribonucleoside 5'-triphosphate = RNA(n+1) + diphosphate. Its function is as follows. DNA-dependent RNA polymerase catalyzes the transcription of DNA into RNA using the four ribonucleoside triphosphates as substrates. This chain is DNA-directed RNA polymerase subunit beta', found in Wigglesworthia glossinidia brevipalpis.